Here is a 365-residue protein sequence, read N- to C-terminus: A-type ATP synthase subunit C (365 aa).

This sequence belongs to the V-ATPase V0D/AC39 subunit family. As to quaternary structure, has multiple subunits with at least A(3), B(3), C, D, E, F, H, I and proteolipid K(x).

The protein localises to the cell membrane. Its function is as follows. Component of the A-type ATP synthase that produces ATP from ADP in the presence of a proton gradient across the membrane. This is A-type ATP synthase subunit C from Thermococcus kodakarensis (strain ATCC BAA-918 / JCM 12380 / KOD1) (Pyrococcus kodakaraensis (strain KOD1)).